The following is a 389-amino-acid chain: Probable dual-specificity RNA methyltransferase RlmN (389 aa).

A disordered region spans residues 1 to 23; it reads MTTQHPDTPETGITPGGTSGAFR. Residue E127 is the Proton acceptor of the active site. One can recognise a Radical SAM core domain in the interval 133 to 376; it reads YPTRTTLCIS…ATLRDTRGQD (244 aa). C140 and C381 are joined by a disulfide. Positions 147, 151, and 154 each coordinate [4Fe-4S] cluster. Residues 202 to 203, S236, 259 to 261, and N338 each bind S-adenosyl-L-methionine; these read GE and SLH. C381 (S-methylcysteine intermediate) is an active-site residue.

The protein belongs to the radical SAM superfamily. RlmN family. The cofactor is [4Fe-4S] cluster.

It localises to the cytoplasm. It carries out the reaction adenosine(2503) in 23S rRNA + 2 reduced [2Fe-2S]-[ferredoxin] + 2 S-adenosyl-L-methionine = 2-methyladenosine(2503) in 23S rRNA + 5'-deoxyadenosine + L-methionine + 2 oxidized [2Fe-2S]-[ferredoxin] + S-adenosyl-L-homocysteine. The catalysed reaction is adenosine(37) in tRNA + 2 reduced [2Fe-2S]-[ferredoxin] + 2 S-adenosyl-L-methionine = 2-methyladenosine(37) in tRNA + 5'-deoxyadenosine + L-methionine + 2 oxidized [2Fe-2S]-[ferredoxin] + S-adenosyl-L-homocysteine. Specifically methylates position 2 of adenine 2503 in 23S rRNA and position 2 of adenine 37 in tRNAs. The sequence is that of Probable dual-specificity RNA methyltransferase RlmN from Bifidobacterium longum (strain NCC 2705).